We begin with the raw amino-acid sequence, 88 residues long: Small ribosomal subunit protein uS19 (88 aa).

This sequence belongs to the universal ribosomal protein uS19 family.

Protein S19 forms a complex with S13 that binds strongly to the 16S ribosomal RNA. In Mycoplasma mycoides subsp. mycoides SC (strain CCUG 32753 / NCTC 10114 / PG1), this protein is Small ribosomal subunit protein uS19.